The sequence spans 254 residues: Ribonuclease HII (254 aa).

Positions 70–254 (QAIAGIDEVG…TFEPIKSMYE (185 aa)) constitute an RNase H type-2 domain. Residues Asp-76, Glu-77, and Asp-168 each coordinate a divalent metal cation.

The protein belongs to the RNase HII family. Mn(2+) serves as cofactor. It depends on Mg(2+) as a cofactor.

The protein resides in the cytoplasm. It carries out the reaction Endonucleolytic cleavage to 5'-phosphomonoester.. Endonuclease that specifically degrades the RNA of RNA-DNA hybrids. In Streptococcus sanguinis (strain SK36), this protein is Ribonuclease HII.